We begin with the raw amino-acid sequence, 352 residues long: CD5 antigen-like (352 aa).

The first 21 residues, 1 to 21 (MAPLFNLMLAILSIFVGSCFS), serve as a signal peptide directing secretion. 3 SRCR domains span residues 27–128 (VQLV…AQCE), 141–241 (VRLV…MECE), and 246–348 (LKLV…VICT). Cystine bridges form between cysteine 36-cysteine 70, cysteine 52-cysteine 117, cysteine 65-cysteine 127, cysteine 98-cysteine 108, cysteine 166-cysteine 230, cysteine 179-cysteine 240, cysteine 211-cysteine 221, cysteine 255-cysteine 289, cysteine 271-cysteine 337, cysteine 284-cysteine 347, and cysteine 317-cysteine 327. A glycan (N-linked (GlcNAc...) asparagine) is linked at asparagine 99. Asparagine 229 carries N-linked (GlcNAc...) asparagine glycosylation.

As to quaternary structure, interacts with FASN; the interaction is direct. Interacts (via SRCR2 and SRCR3) with pentameric IgM (via Fc region); disulfide-linked. Post-translationally, N-glycosylated. N-glycan at Asn-99 possesses only alpha2,6-sialylated terminals, while Asn-229 possesses both alpha2,6-sialylated and non-sialylated terminals. N-glycosylation increases secretion. Specifically expressed in tissue macrophages. Expressed in thymus, liver, spleen and lymph nodes. Present in Th17 cells; mainly present in non-pathogenic Th17 cells.

Its subcellular location is the secreted. The protein resides in the cytoplasm. Functionally, secreted protein that acts as a key regulator of lipid synthesis: mainly expressed by macrophages in lymphoid and inflamed tissues and regulates mechanisms in inflammatory responses, such as infection or atherosclerosis. Able to inhibit lipid droplet size in adipocytes. Following incorporation into mature adipocytes via CD36-mediated endocytosis, associates with cytosolic FASN, inhibiting fatty acid synthase activity and leading to lipolysis, the degradation of triacylglycerols into glycerol and free fatty acids (FFA). CD5L-induced lipolysis occurs with progression of obesity: participates in obesity-associated inflammation following recruitment of inflammatory macrophages into adipose tissues, a cause of insulin resistance and obesity-related metabolic disease. Regulation of intracellular lipids mediated by CD5L has a direct effect on transcription regulation mediated by nuclear receptors ROR-gamma (RORC). Acts as a key regulator of metabolic switch in T-helper Th17 cells. Regulates the expression of pro-inflammatory genes in Th17 cells by altering the lipid content and limiting synthesis of cholesterol ligand of RORC, the master transcription factor of Th17-cell differentiation. CD5L is mainly present in non-pathogenic Th17 cells, where it decreases the content of polyunsaturated fatty acyls (PUFA), affecting two metabolic proteins MSMO1 and CYP51A1, which synthesize ligands of RORC, limiting RORC activity and expression of pro-inflammatory genes. Participates in obesity-associated autoimmunity via its association with IgM, interfering with the binding of IgM to Fcalpha/mu receptor and enhancing the development of long-lived plasma cells that produce high-affinity IgG autoantibodies. Also acts as an inhibitor of apoptosis in macrophages: promotes macrophage survival from the apoptotic effects of oxidized lipids in case of atherosclerosis. Involved in early response to microbial infection against various pathogens by acting as a pattern recognition receptor and by promoting autophagy. In Mus musculus (Mouse), this protein is CD5 antigen-like (Cd5l).